A 197-amino-acid chain; its full sequence is Protein GrpE (197 aa).

The segment at 1–39 (MSSKEQKTPEGQAPEEIIMDQHEEIEAVEPEASAEQVDP) is disordered.

Belongs to the GrpE family. As to quaternary structure, homodimer.

The protein resides in the cytoplasm. Functionally, participates actively in the response to hyperosmotic and heat shock by preventing the aggregation of stress-denatured proteins, in association with DnaK and GrpE. It is the nucleotide exchange factor for DnaK and may function as a thermosensor. Unfolded proteins bind initially to DnaJ; upon interaction with the DnaJ-bound protein, DnaK hydrolyzes its bound ATP, resulting in the formation of a stable complex. GrpE releases ADP from DnaK; ATP binding to DnaK triggers the release of the substrate protein, thus completing the reaction cycle. Several rounds of ATP-dependent interactions between DnaJ, DnaK and GrpE are required for fully efficient folding. This Escherichia coli O127:H6 (strain E2348/69 / EPEC) protein is Protein GrpE.